Here is a 1058-residue protein sequence, read N- to C-terminus: Isoleucine--tRNA ligase (1058 aa).

Residues 48-58 (PYTTGHIHLGT) carry the 'HIGH' region motif. Positions 596–600 (KMSKS) match the 'KMSKS' region motif. Residue K599 coordinates ATP.

The protein belongs to the class-I aminoacyl-tRNA synthetase family. IleS type 2 subfamily. Monomer. Zn(2+) is required as a cofactor.

The protein resides in the cytoplasm. The enzyme catalyses tRNA(Ile) + L-isoleucine + ATP = L-isoleucyl-tRNA(Ile) + AMP + diphosphate. Its function is as follows. Catalyzes the attachment of isoleucine to tRNA(Ile). As IleRS can inadvertently accommodate and process structurally similar amino acids such as valine, to avoid such errors it has two additional distinct tRNA(Ile)-dependent editing activities. One activity is designated as 'pretransfer' editing and involves the hydrolysis of activated Val-AMP. The other activity is designated 'posttransfer' editing and involves deacylation of mischarged Val-tRNA(Ile). The chain is Isoleucine--tRNA ligase from Methanosarcina barkeri (strain Fusaro / DSM 804).